The primary structure comprises 711 residues: Amyloid beta precursor protein binding family B member 1 (711 aa).

Serine 135 is modified (phosphoserine). 3 disordered regions span residues asparagine 140–proline 257, glycine 277–glutamine 300, and glutamate 321–alanine 364. A compositionally biased stretch (acidic residues) spans glutamate 156–leucine 174. At lysine 205 the chain carries N6-acetyllysine. Over residues serine 224–tyrosine 235 the composition is skewed to polar residues. The region spanning serine 254–arginine 286 is the WW domain. Residues serine 288–glutamine 300 show a composition bias toward polar residues. 2 consecutive PID domains span residues asparagine 365–phenylalanine 533 and asparagine 538–serine 700. The residue at position 460 (serine 460) is a Phosphoserine; by PKC. Serine 518 is modified (phosphoserine). Tyrosine 548 is modified (phosphotyrosine; by ABL1). Serine 611 carries the post-translational modification Phosphoserine; by SGK1. Lysine 702 carries the N6-acetyllysine modification.

In terms of assembly, component of a complex, at least composed of APBB1, RASD1/DEXRAS1 and APP. Interacts (via PID domain 2) with APP (with the intracellular domain of the amyloid-beta precursor protein). Interacts (via PID domain 2) with RASD1/DEXRAS1; impairs the transcription activation activity. Interacts (via PID domain 1) with KAT5/TIP60. Interacts (via the WW domain) with the proline-rich region of APBB1IP. Interacts with TSHZ1 and TSHZ2. Interacts (via the WW domain) with histone H2AX (when phosphorylated on 'Tyr-142') and the proline-rich region of ENAH. Interacts with MAPK8. Interacts (via PID domain 1) with TSHZ3 (via homeobox domain). Interacts with SET. Found in a trimeric complex with HDAC1 and TSHZ3; the interaction between HDAC1 and APBB1 is mediated by TSHZ3. Interacts (via WWW domain) with NEK6. Interacts (via WWW domain) with ABL1. Interacts with RNF157. Interacts with ARF6. Polyubiquitination by RNF157 leads to degradation by the proteasome. In terms of processing, phosphorylation at Ser-611 by SGK1 promotes its localization to the nucleus. Phosphorylated following nuclear translocation. Phosphorylation at Tyr-547 by ABL1 enhances transcriptional activation activity and reduces the affinity for RASD1/DEXRAS1. Phosphorylated at Ser-460 by PKC upon insulin activation. Post-translationally, acetylation at Lys-205 and Lys-702 by KAT5 promotes its transcription activator activity. As to expression, brain, not in liver, very low in other tissues. The long (neuron-specific) form is expressed only in brain.

The protein localises to the cell membrane. It localises to the cytoplasm. It is found in the nucleus. The protein resides in the cell projection. Its subcellular location is the growth cone. The protein localises to the nucleus speckle. In terms of biological role, transcription coregulator that can have both coactivator and corepressor functions. Adapter protein that forms a transcriptionally active complex with the gamma-secretase-derived amyloid precursor protein (APP) intracellular domain. Plays a central role in the response to DNA damage by translocating to the nucleus and inducing apoptosis. May act by specifically recognizing and binding histone H2AX phosphorylated on 'Tyr-142' (H2AXY142ph) at double-strand breaks (DSBs), recruiting other pro-apoptosis factors such as MAPK8/JNK1. Required for histone H4 acetylation at double-strand breaks (DSBs). Its ability to specifically bind modified histones and chromatin modifying enzymes such as KAT5/TIP60, probably explains its transcription activation activity. Functions in association with TSHZ3, SET and HDAC factors as a transcriptional repressor, that inhibits the expression of CASP4. Associates with chromatin in a region surrounding the CASP4 transcriptional start site(s). Involved in hippocampal neurite branching and neuromuscular junction formation, as a result plays a role in spatial memory functioning. Plays a role in the maintenance of lens transparency. May play a role in muscle cell strength. Acts as a molecular adapter that functions in neurite outgrowth by activating the RAC1-ARF6 axis upon insulin treatment. The protein is Amyloid beta precursor protein binding family B member 1 of Rattus norvegicus (Rat).